The chain runs to 157 residues: Putative peroxiredoxin MT2597 (157 aa).

Residues 7 to 157 (LTPGDKAPAF…VAKLRRDLSV (151 aa)) form the Thioredoxin domain. Residue Cys-49 is the Cysteine sulfenic acid (-SOH) intermediate of the active site. Cys-49 and Cys-54 are oxidised to a cystine.

It belongs to the peroxiredoxin family. BCP/PrxQ subfamily. Monomer.

It catalyses the reaction a hydroperoxide + [thioredoxin]-dithiol = an alcohol + [thioredoxin]-disulfide + H2O. In terms of biological role, thiol-specific peroxidase that catalyzes the reduction of hydrogen peroxide and organic hydroperoxides to water and alcohols, respectively. Plays a role in cell protection against oxidative stress by detoxifying peroxides and as sensor of hydrogen peroxide-mediated signaling events. The polypeptide is Putative peroxiredoxin MT2597 (bcp) (Mycobacterium tuberculosis (strain CDC 1551 / Oshkosh)).